The primary structure comprises 106 residues: MIITTTPSIEGKNILEYKGVVFGEVISGVNFIKDFAAGLSNFFGGRSNTYEGELIEAREKAMKEMENRAIQIGANAVVGVDIDYEVLGADNGMLMVTASGTAVYYE.

This sequence belongs to the UPF0145 family.

The sequence is that of UPF0145 protein CLL_A2504 from Clostridium botulinum (strain Eklund 17B / Type B).